A 458-amino-acid polypeptide reads, in one-letter code: Bifunctional protein GlmU (458 aa).

The segment at Met-1–Arg-229 is pyrophosphorylase. UDP-N-acetyl-alpha-D-glucosamine is bound by residues Leu-8–Gly-11, Lys-22, Gln-72, and Gly-77–Thr-78. Asp-102 provides a ligand contact to Mg(2+). Gly-139, Glu-154, Asn-169, and Asn-227 together coordinate UDP-N-acetyl-alpha-D-glucosamine. Residue Asn-227 coordinates Mg(2+). The segment at Val-230–Asn-250 is linker. The interval Gly-251–Gln-458 is N-acetyltransferase. Residues Arg-332 and Lys-350 each contribute to the UDP-N-acetyl-alpha-D-glucosamine site. His-362 acts as the Proton acceptor in catalysis. UDP-N-acetyl-alpha-D-glucosamine is bound by residues Tyr-365 and Asn-376. 4 residues coordinate acetyl-CoA: Ala-379, Ser-404, Ala-422, and Arg-439.

The protein in the N-terminal section; belongs to the N-acetylglucosamine-1-phosphate uridyltransferase family. It in the C-terminal section; belongs to the transferase hexapeptide repeat family. Homotrimer. Mg(2+) serves as cofactor.

It is found in the cytoplasm. The catalysed reaction is alpha-D-glucosamine 1-phosphate + acetyl-CoA = N-acetyl-alpha-D-glucosamine 1-phosphate + CoA + H(+). It carries out the reaction N-acetyl-alpha-D-glucosamine 1-phosphate + UTP + H(+) = UDP-N-acetyl-alpha-D-glucosamine + diphosphate. It functions in the pathway nucleotide-sugar biosynthesis; UDP-N-acetyl-alpha-D-glucosamine biosynthesis; N-acetyl-alpha-D-glucosamine 1-phosphate from alpha-D-glucosamine 6-phosphate (route II): step 2/2. The protein operates within nucleotide-sugar biosynthesis; UDP-N-acetyl-alpha-D-glucosamine biosynthesis; UDP-N-acetyl-alpha-D-glucosamine from N-acetyl-alpha-D-glucosamine 1-phosphate: step 1/1. It participates in bacterial outer membrane biogenesis; LPS lipid A biosynthesis. In terms of biological role, catalyzes the last two sequential reactions in the de novo biosynthetic pathway for UDP-N-acetylglucosamine (UDP-GlcNAc). The C-terminal domain catalyzes the transfer of acetyl group from acetyl coenzyme A to glucosamine-1-phosphate (GlcN-1-P) to produce N-acetylglucosamine-1-phosphate (GlcNAc-1-P), which is converted into UDP-GlcNAc by the transfer of uridine 5-monophosphate (from uridine 5-triphosphate), a reaction catalyzed by the N-terminal domain. This Lactococcus lactis subsp. lactis (strain IL1403) (Streptococcus lactis) protein is Bifunctional protein GlmU.